Here is a 65-residue protein sequence, read N- to C-terminus: Translational regulator CsrA (65 aa).

This sequence belongs to the CsrA/RsmA family. Homodimer; the beta-strands of each monomer intercalate to form a hydrophobic core, while the alpha-helices form wings that extend away from the core.

The protein localises to the cytoplasm. Its function is as follows. A translational regulator that binds mRNA to regulate translation initiation and/or mRNA stability. Usually binds in the 5'-UTR at or near the Shine-Dalgarno sequence preventing ribosome-binding, thus repressing translation. Its main target seems to be the major flagellin gene, while its function is anatagonized by FliW. The sequence is that of Translational regulator CsrA from Bordetella petrii (strain ATCC BAA-461 / DSM 12804 / CCUG 43448).